A 194-amino-acid polypeptide reads, in one-letter code: Ion-translocating oxidoreductase complex subunit A (194 aa).

The next 6 membrane-spanning stretches (helical) occupy residues 4 to 24, 39 to 59, 72 to 92, 102 to 122, 135 to 155, and 172 to 192; these read LALI…QFLG, IGLS…SHIL, LRTI…EMLV, VLGI…VALL, TTQG…FAAL, and AIGM…SGLV.

It belongs to the NqrDE/RnfAE family. As to quaternary structure, the complex is composed of six subunits: RnfA, RnfB, RnfC, RnfD, RnfE and RnfG.

Its subcellular location is the cell inner membrane. In terms of biological role, part of a membrane-bound complex that couples electron transfer with translocation of ions across the membrane. This chain is Ion-translocating oxidoreductase complex subunit A, found in Pseudomonas aeruginosa (strain LESB58).